A 441-amino-acid polypeptide reads, in one-letter code: tRNA pseudouridine synthase Pus10 (441 aa).

Catalysis depends on Asp268, which acts as the Nucleophile. Substrate is bound by residues Tyr333 and Tyr405.

Belongs to the pseudouridine synthase Pus10 family.

The catalysed reaction is uridine(54) in tRNA = pseudouridine(54) in tRNA. The enzyme catalyses uridine(55) in tRNA = pseudouridine(55) in tRNA. Functionally, responsible for synthesis of pseudouridine from uracil-54 and uracil-55 in the psi GC loop of transfer RNAs. This chain is tRNA pseudouridine synthase Pus10, found in Thermosphaera aggregans (strain DSM 11486 / M11TL).